Consider the following 241-residue polypeptide: Ribonuclease PH (241 aa).

Residues Arg-89 and 127 to 129 (GTR) each bind phosphate.

Belongs to the RNase PH family. In terms of assembly, homohexameric ring arranged as a trimer of dimers.

It catalyses the reaction tRNA(n+1) + phosphate = tRNA(n) + a ribonucleoside 5'-diphosphate. In terms of biological role, phosphorolytic 3'-5' exoribonuclease that plays an important role in tRNA 3'-end maturation. Removes nucleotide residues following the 3'-CCA terminus of tRNAs; can also add nucleotides to the ends of RNA molecules by using nucleoside diphosphates as substrates, but this may not be physiologically important. Probably plays a role in initiation of 16S rRNA degradation (leading to ribosome degradation) during starvation. This is Ribonuclease PH from Xylella fastidiosa (strain M23).